A 473-amino-acid polypeptide reads, in one-letter code: MLWAHCGRFLRYHLLPLLLCRLPFLLFFQRPQWAHGLDIVEEDEWLREIQGATYQLSIVRQAMQHAGFQVRAASVMTRRNAVDLDRPPLWSGSLPHLPVYDVRSPRPLRPPSSQHHAVSPELPSRNGIRWQYQELQYLVEEQRRRNQSRNAIPRPSFPPPDPPSQPAEDARDADAERAESPHTAESTVSHDASDNAVRRRHERRRYNALTVRSRDSLLLTRIRFSNQRCFGRGRLRHPAGSGPNTGGPRPGGAGLRQLRQQLTVRWQLFRLRCHGWTQQVSSQIRTRWEESNVVSQTATRVRTWFVQRTTLWRRTWVPGQNPAAEAQELAIIPPAPTVLRQNEEPRQQLTGEETRNSTHTQREEVEDVSREGAREGNDGSRASGNDERRNNAGRYDDDHEVQEPQVTYPAGQGELNRRSQEENEEGGPCESPPMTTNTLTVACPPREPPHRALFRLCLGLWVSSYLVRRPMTI.

The N-terminal stretch at 1–35 is a signal peptide; sequence MLWAHCGRFLRYHLLPLLLCRLPFLLFFQRPQWAH. Disordered regions lie at residues 142 to 201, 232 to 254, and 331 to 437; these read QRRR…RRRH, RGRL…GGAG, and IIPP…MTTN. Over residues 155 to 165 the composition is skewed to pro residues; sequence PSFPPPDPPSQ. Residues 168–182 are compositionally biased toward basic and acidic residues; it reads EDARDADAERAESPH. Residues 243–254 are compositionally biased toward gly residues; it reads PNTGGPRPGGAG. Residues 341–397 are compositionally biased toward basic and acidic residues; the sequence is QNEEPRQQLTGEETRNSTHTQREEVEDVSREGAREGNDGSRASGNDERRNNAGRYDD.

This sequence belongs to the HHV-5 UL13 protein family. In terms of assembly, interacts with host MICOS complex subunits IMMT and CHCHD3.

Its subcellular location is the host mitochondrion. Plays an essential role during infection by modulating mitochondrial ultrastructure and thereby increasing bioenergetic potential. Mechanistically, alters cristae architecture by interacting with components of the host mitochondrial contact site and cristae organizing system (MICOS) complex. This is an uncharacterized protein from Human cytomegalovirus (strain Merlin) (HHV-5).